A 182-amino-acid chain; its full sequence is Ferritin heavy chain (182 aa).

Met-1 is subject to N-acetylmethionine. Position 2 is an N-acetylthreonine; in Ferritin heavy chain, N-terminally processed (Thr-2). A Ferritin-like diiron domain is found at 11 to 160; the sequence is QNYHQDSEAA…DHVTNLRRMG (150 aa). Residues Glu-28, Glu-63, His-66, Glu-108, and Gln-142 each contribute to the Fe cation site.

This sequence belongs to the ferritin family. In terms of assembly, oligomer of 24 subunits. There are two types of subunits: L (light) chain and H (heavy) chain. The major chain can be light or heavy, depending on the species and tissue type. The functional molecule forms a roughly spherical shell with a diameter of 12 nm and contains a central cavity into which the insoluble mineral iron core is deposited. Interacts with NCOA4; NCOA4 promotes targeting of the iron-binding ferritin complex to autolysosomes following starvation or iron depletion.

It localises to the cytoplasm. The protein resides in the lysosome. Its subcellular location is the cytoplasmic vesicle. The protein localises to the autophagosome. It catalyses the reaction 4 Fe(2+) + O2 + 4 H(+) = 4 Fe(3+) + 2 H2O. Stores iron in a soluble, non-toxic, readily available form. Important for iron homeostasis. Has ferroxidase activity. Iron is taken up in the ferrous form and deposited as ferric hydroxides after oxidation. Also plays a role in delivery of iron to cells. Mediates iron uptake in capsule cells of the developing kidney. Delivery to lysosomes is mediated by the cargo receptor NCOA4 for autophagic degradation and release of iron. This Equus caballus (Horse) protein is Ferritin heavy chain (FTH1).